A 688-amino-acid chain; its full sequence is Polyribonucleotide nucleotidyltransferase (688 aa).

Mg(2+) contacts are provided by Asp484 and Asp490. The KH domain occupies 550-609 (PTTEIFNVAPDKIVEIIGQGGRVIREIVEKFEVKIDLNKPSGEVKIMGNKERVLKTKEFI). The S1 motif domain occupies 626–688 (DEVLEAQVKR…NKGKIALDLA (63 aa)).

This sequence belongs to the polyribonucleotide nucleotidyltransferase family. Mg(2+) serves as cofactor.

Its subcellular location is the cytoplasm. It carries out the reaction RNA(n+1) + phosphate = RNA(n) + a ribonucleoside 5'-diphosphate. Involved in mRNA degradation. Catalyzes the phosphorolysis of single-stranded polyribonucleotides processively in the 3'- to 5'-direction. The protein is Polyribonucleotide nucleotidyltransferase of Helicobacter pylori (strain Shi470).